The chain runs to 125 residues: MADLAKIEEQLSSLTLMQAAELVKMLEEKWGVSAAAPVAVAAAGAAAPAAEAAAEKTEFEIVLMAAGDKKVEVIKVVKDITGLGLIEAKKLVDEAPKPMKSNVKKAEAEEIKGKLEAAGAKVELK.

The protein belongs to the bacterial ribosomal protein bL12 family. As to quaternary structure, homodimer. Part of the ribosomal stalk of the 50S ribosomal subunit. Forms a multimeric L10(L12)X complex, where L10 forms an elongated spine to which 2 to 4 L12 dimers bind in a sequential fashion. Binds GTP-bound translation factors.

In terms of biological role, forms part of the ribosomal stalk which helps the ribosome interact with GTP-bound translation factors. Is thus essential for accurate translation. The sequence is that of Large ribosomal subunit protein bL12 from Rickettsia felis (strain ATCC VR-1525 / URRWXCal2) (Rickettsia azadi).